We begin with the raw amino-acid sequence, 319 residues long: Acetyl esterase (319 aa).

The Involved in the stabilization of the negatively charged intermediate by the formation of the oxyanion hole signature appears at 91-93 (HGG). Active-site residues include Ser165, Asp262, and His292.

Belongs to the 'GDXG' lipolytic enzyme family. In terms of assembly, homodimer. Interacts with MalT and MelA.

The protein localises to the cytoplasm. In terms of biological role, displays esterase activity towards short chain fatty esters (acyl chain length of up to 8 carbons). Able to hydrolyze triacetylglycerol (triacetin) and tributyrylglycerol (tributyrin), but not trioleylglycerol (triolein) or cholesterol oleate. Negatively regulates MalT activity by antagonizing maltotriose binding. Inhibits MelA galactosidase activity. The sequence is that of Acetyl esterase from Escherichia coli O157:H7.